The primary structure comprises 353 residues: Carbamoyl phosphate synthase arginine-specific small chain (353 aa).

The tract at residues 1-162 is CPSase; that stretch reads MEGYLVLEDG…EISTFGDGNK (162 aa). 3 residues coordinate L-glutamine: S44, G210, and G212. Residues 163 to 349 form the Glutamine amidotransferase type-1 domain; it reads HIALIDFGYK…LKNVIPARRE (187 aa). C237 acts as the Nucleophile in catalysis. Residues L238, Q241, N279, and Y282 each contribute to the L-glutamine site. Catalysis depends on residues H322 and E324.

This sequence belongs to the CarA family. In terms of assembly, composed of two chains; the small (or glutamine) chain promotes the hydrolysis of glutamine to ammonia, which is used by the large (or ammonia) chain to synthesize carbamoyl phosphate. Tetramer of heterodimers (alpha,beta)4.

It catalyses the reaction hydrogencarbonate + L-glutamine + 2 ATP + H2O = carbamoyl phosphate + L-glutamate + 2 ADP + phosphate + 2 H(+). The catalysed reaction is L-glutamine + H2O = L-glutamate + NH4(+). Its pathway is amino-acid biosynthesis; L-arginine biosynthesis; carbamoyl phosphate from bicarbonate: step 1/1. Its function is as follows. Small subunit of the glutamine-dependent carbamoyl phosphate synthetase (CPSase). CPSase catalyzes the formation of carbamoyl phosphate from the ammonia moiety of glutamine, carbonate, and phosphate donated by ATP, constituting the first step of the biosynthetic pathway leading to arginine and/or urea. The small subunit (glutamine amidotransferase) binds and cleaves glutamine to supply the large subunit with the substrate ammonia. The protein is Carbamoyl phosphate synthase arginine-specific small chain of Bacillus subtilis (strain 168).